The sequence spans 164 residues: MARPQQRYRGFRQRHWGSWVSEIRHSILKTRIWQGTFESAEDAARAYDEAARLMCGTRARTNFPYNPNASQSSSSKLLSATLIAKLHRCYMASLQMTRPSSLPEAPRIIASPNNAVKGIGADAMLLPKKREQEEQETGGNLDFKKVKVECSQQFKPLEEDHIAQ.

A DNA-binding region (AP2/ERF) is located at residues 7-64 (RYRGFRQRHWGSWVSEIRHSILKTRIWQGTFESAEDAARAYDEAARLMCGTRARTNFP).

The protein resides in the nucleus. Its function is as follows. Essential for all lupin cells independent of the respective tissue. The sequence is that of Protein PPLZ02 (PPLZ02) from Lupinus polyphyllus (Large-leaved lupine).